The following is a 249-amino-acid chain: uncharacterized protein (249 aa).

The N-terminal stretch at 1 to 36 (MAKSPARRCTAKVRRVLSRSVLILCWSLLGAAPAHA) is a signal peptide. Residues 227–249 (ARQPPGRWVCPSSAGGPIGWHRQ) are disordered.

This is an uncharacterized protein from Mycobacterium tuberculosis (strain CDC 1551 / Oshkosh).